We begin with the raw amino-acid sequence, 112 residues long: Large ribosomal subunit protein P2-B (112 aa).

The interval 89-112 (APAAADAKKEEEEEDDDMGFGLFD) is disordered.

Belongs to the eukaryotic ribosomal protein P1/P2 family. As to quaternary structure, P1 and P2 exist as dimers at the large ribosomal subunit. Post-translationally, phosphorylated.

Its function is as follows. Plays an important role in the elongation step of protein synthesis. The protein is Large ribosomal subunit protein P2-B of Trypanosoma cruzi.